Here is a 421-residue protein sequence, read N- to C-terminus: UDP-N-acetylglucosamine 1-carboxyvinyltransferase (421 aa).

Residue 22–23 coordinates phosphoenolpyruvate; it reads KN. UDP-N-acetyl-alpha-D-glucosamine is bound at residue arginine 93. Cysteine 117 acts as the Proton donor in catalysis. The residue at position 117 (cysteine 117) is a 2-(S-cysteinyl)pyruvic acid O-phosphothioketal. Residues 122–126, aspartate 308, and isoleucine 330 each bind UDP-N-acetyl-alpha-D-glucosamine; that span reads RPVDL.

It belongs to the EPSP synthase family. MurA subfamily.

The protein localises to the cytoplasm. The enzyme catalyses phosphoenolpyruvate + UDP-N-acetyl-alpha-D-glucosamine = UDP-N-acetyl-3-O-(1-carboxyvinyl)-alpha-D-glucosamine + phosphate. Its pathway is cell wall biogenesis; peptidoglycan biosynthesis. Its function is as follows. Cell wall formation. Adds enolpyruvyl to UDP-N-acetylglucosamine. The sequence is that of UDP-N-acetylglucosamine 1-carboxyvinyltransferase from Pseudomonas fluorescens (strain SBW25).